The following is a 491-amino-acid chain: Chromosomal replication initiator protein DnaA (491 aa).

The interval 1–68 (MTSIWGQIQH…RTAACGVIGD (68 aa)) is domain I, interacts with DnaA modulators. Positions 68-146 (DTVEVVVTAG…PLDWAPVPQS (79 aa)) are domain II. Residues 147 to 364 (RTNWRFSFDD…SCLHNLILKA (218 aa)) form a domain III, AAA+ region region. The ATP site is built by Gly-190, Gly-192, Lys-193, and Thr-194. A domain IV, binds dsDNA region spans residues 365–491 (KLLNRQISLE…RNGRITHARH (127 aa)).

It belongs to the DnaA family. Oligomerizes as a right-handed, spiral filament on DNA at oriC.

Its subcellular location is the cytoplasm. In terms of biological role, plays an essential role in the initiation and regulation of chromosomal replication. ATP-DnaA binds to the origin of replication (oriC) to initiate formation of the DNA replication initiation complex once per cell cycle. Binds the DnaA box (a 9 base pair repeat at the origin) and separates the double-stranded (ds)DNA. Forms a right-handed helical filament on oriC DNA; dsDNA binds to the exterior of the filament while single-stranded (ss)DNA is stabiized in the filament's interior. The ATP-DnaA-oriC complex binds and stabilizes one strand of the AT-rich DNA unwinding element (DUE), permitting loading of DNA polymerase. After initiation quickly degrades to an ADP-DnaA complex that is not apt for DNA replication. Binds acidic phospholipids. In Nitratidesulfovibrio vulgaris (strain ATCC 29579 / DSM 644 / CCUG 34227 / NCIMB 8303 / VKM B-1760 / Hildenborough) (Desulfovibrio vulgaris), this protein is Chromosomal replication initiator protein DnaA.